Consider the following 1274-residue polypeptide: Paired amphipathic helix protein Sin3a (1274 aa).

Disordered stretches follow at residues 1-26 (MKRR…STEA) and 85-110 (HHHP…PPVA). Phosphoserine is present on Ser10. The PAH 1 domain occupies 119-189 (QRLKVEDALS…MGFNTFLPPG (71 aa)). The tract at residues 119 to 196 (QRLKVEDALS…PPGYKIEVQT (78 aa)) is interaction with HCFC1. Glycyl lysine isopeptide (Lys-Gly) (interchain with G-Cter in SUMO2) cross-links involve residues Lys122 and Lys134. The tract at residues 205 to 297 (PGQVHQIPTH…ISLGTAPSLQ (93 aa)) is disordered. The segment at 205-479 (PGQVHQIPTH…KVRKALRSAE (275 aa)) is interaction with REST. Positions 228–237 (SQPSSQSAPT) are enriched in low complexity. Positions 252 to 266 (KPSQLQAHTPASQQT) are enriched in polar residues. Pro residues predominate over residues 267-282 (PPLPPYASPRSPPVQP). Ser277 carries the phosphoserine modification. The residue at position 284 (Thr284) is a Phosphothreonine. Over residues 284-297 (TPVTISLGTAPSLQ) the composition is skewed to polar residues. Residues 300–383 (QPVEFNHAIN…SEFGQFLPDA (84 aa)) form the PAH 2 domain. The segment at 398-443 (DSVRNDHGGTVKKPQLNNKPQRPSQNGCQIRRHSGTGATPPVKKKP) is disordered. A compositionally biased stretch (polar residues) spans 412–425 (QLNNKPQRPSQNGC). In terms of domain architecture, PAH 3 spans 457 to 526 (SKHGVGTESL…NWFKNFLGYK (70 aa)). Residues 459 to 526 (HGVGTESLFF…NWFKNFLGYK (68 aa)) are interaction with SAP30. N6-acetyllysine is present on Lys470. Residues 524 to 851 (GYKESVHLES…EMDVDEATGA (328 aa)) are interaction with NCOR1. Residues 525 to 660 (YKESVHLESF…KFRLDNTLGG (136 aa)) are interactions with SUDS3 and SAP130. Lys564 participates in a covalent cross-link: Glycyl lysine isopeptide (Lys-Gly) (interchain with G-Cter in SUMO2). The interval 688–830 (NPSIAVPIVL…IPDLLFAQRG (143 aa)) is interactions with HDAC1 and ARID4B. Ser833 is subject to Phosphoserine. Positions 835 to 847 (VEEEEEEEMDVDE) are enriched in acidic residues. The interval 835-865 (VEEEEEEEMDVDEATGAPKKHNGVGGSPPKS) is disordered. At Ser861 the chain carries Phosphoserine. An N6-acetyllysine mark is found at Lys866 and Lys876. Residues 889 to 968 (VNNNWYIFMR…YYPAFLDMVR (80 aa)) form an interaction with OGT region. Residues 904–933 (CLRLLRICSQAERQIEEENREREWEREVLG) adopt a coiled-coil conformation. Phosphoserine occurs at positions 941, 1090, and 1113. The interval 1137 to 1157 (CQRGREQQEKEGKEGNSKKTM) is disordered. Over residues 1139-1157 (RGREQQEKEGKEGNSKKTM) the composition is skewed to basic and acidic residues.

In terms of assembly, interacts with ARID4B, BRMS1L, HCFC1, HDAC1, HDAC2, MXI1, SAP30L, SAP130, SFPQ and TOPORS. Interacts with OGT (via TPRs 1-6); the interaction mediates transcriptional repression in parallel with histone deacetylase. Interacts with BAZ2A, MXD1, MXD3, MXD4, MBD2, DACH1, NCOR1, NR4A2, REST, RLIM, SAP30, SETDB1, SMYD2, and SUDS3. Interacts with PHF12 in a complex composed of HDAC1, PHF12 and SAP30. Interacts with TET1; the interaction recruits SIN3A to gene promoters. The large PER complex involved in the histone deacetylation is composed of at least HDAC1, PER2, SFPQ and SIN3A. Interacts with KLF11. Interacts with PPHLN1. Found in a complex with YY1, GON4L and HDAC1. Interacts (via PAH2) with FOXK1. Interacts with FOXK2. Found in a complex composed of at least SINHCAF, SIN3A, HDAC1, SAP30, RBBP4, OGT and TET1. Interacts with SINHCAF. Interacts with SPHK2. SUMO1 sumoylated by TOPORS. Probably desumoylated by SENP2. Widely expressed. Highest levels in testis, lung and thymus. Expressed at relatively high levels throughout brain development. In adult mice, expression is high in neurogenic regions such as the subventricular zone, rostral migratory stream, olfactory bulb and dentate gyrus.

Its subcellular location is the nucleus. It is found in the nucleolus. Its function is as follows. Acts as a transcriptional repressor. Corepressor for REST. Interacts with MXI1 to repress MYC responsive genes and antagonize MYC oncogenic activities. Also interacts with MXD1-MAX heterodimers to repress transcription by tethering SIN3A to DNA. Acts cooperatively with OGT to repress transcription in parallel with histone deacetylation. Involved in the control of the circadian rhythms. Required for the transcriptional repression of circadian target genes, such as PER1, mediated by the large PER complex through histone deacetylation. Cooperates with FOXK1 to regulate cell cycle progression probably by repressing cell cycle inhibitor genes expression. Required for cortical neuron differentiation and callosal axon elongation. This chain is Paired amphipathic helix protein Sin3a (Sin3a), found in Mus musculus (Mouse).